Here is a 294-residue protein sequence, read N- to C-terminus: Pyridoxal 5'-phosphate synthase subunit PdxS (294 aa).

Asp24 is a D-ribose 5-phosphate binding site. The Schiff-base intermediate with D-ribose 5-phosphate role is filled by Lys81. Gly153 serves as a coordination point for D-ribose 5-phosphate. Arg165 is a D-glyceraldehyde 3-phosphate binding site. D-ribose 5-phosphate is bound by residues Gly214 and 235–236 (GS).

It belongs to the PdxS/SNZ family. As to quaternary structure, homohexamer and homododecamer. In the presence of PdxT, forms a dodecamer of heterodimers.

The catalysed reaction is aldehydo-D-ribose 5-phosphate + D-glyceraldehyde 3-phosphate + L-glutamine = pyridoxal 5'-phosphate + L-glutamate + phosphate + 3 H2O + H(+). It functions in the pathway cofactor biosynthesis; pyridoxal 5'-phosphate biosynthesis. Functionally, catalyzes the formation of pyridoxal 5'-phosphate from ribose 5-phosphate (RBP), glyceraldehyde 3-phosphate (G3P) and ammonia. The ammonia is provided by the PdxT subunit. Can also use ribulose 5-phosphate and dihydroxyacetone phosphate as substrates, resulting from enzyme-catalyzed isomerization of RBP and G3P, respectively. The protein is Pyridoxal 5'-phosphate synthase subunit PdxS of Bacillus subtilis (strain 168).